The primary structure comprises 670 residues: PML-RARA-regulated adapter molecule 1 (670 aa).

Residues 1–561 (MAHHLPAAME…PQQLPPMDPK (561 aa)) are disordered. Over residues 31–43 (DLPKKPPKPEFGK) the composition is skewed to basic and acidic residues. 4 tandem repeats follow at residues 70–81 (KPPPPEVTDLPK), 82–93 (KPPPPEVTDLPK), 94–105 (KPPPPEVTDLPK), and 106–117 (KPPPPEVTDLPK). The tract at residues 70–165 (KPPPPEVTDL…SLPEPGAPAR (96 aa)) is 4 X 12 AA repeats of K-P-P-[PQ]-P-[EQ]-[VAF]-T-D-L-P-K. A compositionally biased stretch (basic and acidic residues) spans 114–129 (DLPKKPSKLELSDLSK). At Ser-340 the chain carries Phosphoserine. Residues 386–398 (SSASESSLPAAVA) are compositionally biased toward low complexity. Over residues 454–463 (PAKPPLPPGP) the composition is skewed to pro residues. A compositionally biased stretch (acidic residues) spans 504–514 (EIYELYDDVEP). The segment covering 515–528 (RDDSSPSPKGRDEA) has biased composition (basic and acidic residues). One can recognise an SH3 domain in the interval 571-649 (KAEREFRKKF…PRTALLPLET (79 aa)).

Interacts with SKAP2, LCP2 and DBNL. May interact with LYN. Interacts with NEK6. In terms of processing, may be phosphorylated on tyrosines. In terms of tissue distribution, expressed in peripheral blood leukocytes and bone marrow. Expressed in monocytes, and to a lesser extent in granulocytes and lymphocytes. Not expressed in non hematopoietic tissues except in lung.

Functionally, may be involved in myeloid differentiation. May be involved in integrin signaling in neutrophils. Binds to PtdIns(4)P. The polypeptide is PML-RARA-regulated adapter molecule 1 (PRAM1) (Homo sapiens (Human)).